Here is a 248-residue protein sequence, read N- to C-terminus: UDP-2,3-diacylglucosamine hydrolase (248 aa).

Mn(2+) contacts are provided by aspartate 8, histidine 10, aspartate 41, asparagine 79, and histidine 114. Substrate is bound at residue 79-80; that stretch reads NR. Aspartate 122, asparagine 164, arginine 167, and histidine 195 together coordinate substrate. Residues histidine 195 and histidine 197 each coordinate Mn(2+).

It belongs to the LpxH family. The cofactor is Mn(2+).

The protein resides in the cell inner membrane. It carries out the reaction UDP-2-N,3-O-bis[(3R)-3-hydroxytetradecanoyl]-alpha-D-glucosamine + H2O = 2-N,3-O-bis[(3R)-3-hydroxytetradecanoyl]-alpha-D-glucosaminyl 1-phosphate + UMP + 2 H(+). Its pathway is glycolipid biosynthesis; lipid IV(A) biosynthesis; lipid IV(A) from (3R)-3-hydroxytetradecanoyl-[acyl-carrier-protein] and UDP-N-acetyl-alpha-D-glucosamine: step 4/6. Its function is as follows. Hydrolyzes the pyrophosphate bond of UDP-2,3-diacylglucosamine to yield 2,3-diacylglucosamine 1-phosphate (lipid X) and UMP by catalyzing the attack of water at the alpha-P atom. Involved in the biosynthesis of lipid A, a phosphorylated glycolipid that anchors the lipopolysaccharide to the outer membrane of the cell. The chain is UDP-2,3-diacylglucosamine hydrolase from Wigglesworthia glossinidia brevipalpis.